A 127-amino-acid polypeptide reads, in one-letter code: Fluoride-specific ion channel FluC (127 aa).

4 helical membrane-spanning segments follow: residues 4–24, 35–55, 71–91, and 101–121; these read IMLAVFLGGGTGSVLRWWLGL, VGTLTANLAGAFIIGAGLAWF, TGLCGGLTTFSTFSAEVVFLL, and LNVALNLFGSFMMTALAFWLF. Positions 75 and 78 each coordinate Na(+).

Belongs to the fluoride channel Fluc/FEX (TC 1.A.43) family.

It is found in the cell inner membrane. The enzyme catalyses fluoride(in) = fluoride(out). Na(+) is not transported, but it plays an essential structural role and its presence is essential for fluoride channel function. Functionally, fluoride-specific ion channel. Important for reducing fluoride concentration in the cell, thus reducing its toxicity. This chain is Fluoride-specific ion channel FluC, found in Cronobacter sakazakii (strain ATCC BAA-894) (Enterobacter sakazakii).